Consider the following 1131-residue polypeptide: Phytochrome A (1131 aa).

A disordered region spans residues 1 to 23 (MSSSRPAHSSSSSSRTRQSSRAR). Residues 219–404 (SMEALCNTVV…VFAVHVNKEF (186 aa)) form the GAF domain. Residue Cys-324 participates in phytochromobilin binding. 2 consecutive PAS domains span residues 620–690 (VTSE…LQGR) and 750–834 (VEGD…LAGE). The Histidine kinase domain maps to 904–1124 (YMRHAINKPL…TFILTAELAA (221 aa)).

It belongs to the phytochrome family. As to quaternary structure, homodimer. Post-translationally, contains one covalently linked phytochromobilin chromophore.

Functionally, regulatory photoreceptor which exists in two forms that are reversibly interconvertible by light: the Pr form that absorbs maximally in the red region of the spectrum and the Pfr form that absorbs maximally in the far-red region. Photoconversion of Pr to Pfr induces an array of morphogenic responses, whereas reconversion of Pfr to Pr cancels the induction of those responses. Pfr controls the expression of a number of nuclear genes including those encoding the small subunit of ribulose-bisphosphate carboxylase, chlorophyll A/B binding protein, protochlorophyllide reductase, rRNA, etc. It also controls the expression of its own gene(s) in a negative feedback fashion. This is Phytochrome A (PHYA1) from Zea mays (Maize).